The sequence spans 726 residues: Sensory/regulatory protein RpfC (726 aa).

The Periplasmic segment spans residues 1–22; sequence MKSPLPWLKRRLSGRADSEHAQ. The tract at residues 1-22 is sensor; the sequence is MKSPLPWLKRRLSGRADSEHAQ. Residues 23 to 40 form a helical membrane-spanning segment; it reads NLIRIIITTLFISYLGWR. At 41–51 the chain is on the cytoplasmic side; that stretch reads YQHTHGDTLMA. The chain crosses the membrane as a helical span at residues 52 to 72; the sequence is TWLILVGELLVSLGLMVAILL. Residues 73 to 94 are Periplasmic-facing; the sequence is RPQVSHTRRLIGMLLDYTCTGA. The chain crosses the membrane as a helical span at residues 95-115; sequence IMAIQGEPASPLYAVCMWVTI. The Cytoplasmic portion of the chain corresponds to 116 to 127; the sequence is GNGLRYGSNYLR. A helical membrane pass occupies residues 128-148; it reads AATAMGSLCFLGAILISPYWK. Over 149–151 the chain is Periplasmic; that stretch reads ANP. A helical membrane pass occupies residues 152 to 172; that stretch reads YLSWGLLLGLIAVPLYFDSLL. The Cytoplasmic segment spans residues 173–726; sequence RAMTRAVREA…DGECSPRSNE (554 aa). The 223-residue stretch at 195-417 folds into the Histidine kinase domain; that stretch reads NMSHEFRTPL…VFWFELPMAI (223 aa). A Phosphohistidine; by autocatalysis modification is found at His198. Positions 463-581 constitute a Response regulatory domain; that stretch reads RMLVADDHEA…KLLDTLADLA (119 aa). Position 512 is a 4-aspartylphosphate (Asp512). The HPt domain maps to 618-711; sequence GEEFERQFVR…KAGKDALDAR (94 aa). The residue at position 657 (His657) is a Phosphohistidine.

At low DSF concentrations, interacts with RpfF. Post-translationally, autophosphorylated. Activation may require a sequential transfer of a phosphate group from a His in the primary transmitter domain, to an Asp in the receiver domain and to a His in the secondary transmitter domain.

The protein localises to the cell inner membrane. The enzyme catalyses ATP + protein L-histidine = ADP + protein N-phospho-L-histidine.. Binding of DSF to the sensor region causes allosteric change, which facilitates RpfC autophosphorylation. In terms of biological role, hybrid sensor kinase that regulates diverse biological functions through two distinct molecular mechanisms. At low cell density, the extracellular concentration of the diffusible signaling factor (DSF) is below a threshold, and unphosphorylated RpfC is involved in the negative regulation of DSF synthesis, via direct interaction with the DSF synthase RpfF. Interaction prevents synthesis of DSF, which remains at a basal level. This activity does not involve the phosphorelay mechanism and is not dependent on RpfG. Is also member of the two-component regulatory system RpfG/RpfC, which is involved in the perception and response to DSF, which is essential for cell-cell signaling. At high cell density, the level of extracellular DSF increases and binding of DSF to the sensor region of RpfC causes autophosphorylation of RpfC, which results in the release of RpfF and the activation of RpfG via a four-step phosphorelay. Activation of RpfG leads to the positive regulation of biofilm dispersal and the production of virulence factors. The sequence is that of Sensory/regulatory protein RpfC (rpfC) from Xanthomonas campestris pv. campestris (strain 8004).